The sequence spans 914 residues: Isoleucine--tRNA ligase (914 aa).

The 'HIGH' region signature appears at 64 to 74 (PYANGNFHLGH). Residue glutamate 557 participates in L-isoleucyl-5'-AMP binding. Residues 598-602 (PMSKS) carry the 'KMSKS' region motif. Lysine 601 lines the ATP pocket. Positions 889, 892, 906, and 909 each coordinate Zn(2+).

The protein belongs to the class-I aminoacyl-tRNA synthetase family. IleS type 1 subfamily. In terms of assembly, monomer. Zn(2+) serves as cofactor.

It localises to the cytoplasm. It carries out the reaction tRNA(Ile) + L-isoleucine + ATP = L-isoleucyl-tRNA(Ile) + AMP + diphosphate. Functionally, catalyzes the attachment of isoleucine to tRNA(Ile). As IleRS can inadvertently accommodate and process structurally similar amino acids such as valine, to avoid such errors it has two additional distinct tRNA(Ile)-dependent editing activities. One activity is designated as 'pretransfer' editing and involves the hydrolysis of activated Val-AMP. The other activity is designated 'posttransfer' editing and involves deacylation of mischarged Val-tRNA(Ile). The protein is Isoleucine--tRNA ligase of Leptospira interrogans serogroup Icterohaemorrhagiae serovar Lai (strain 56601).